The following is a 103-amino-acid chain: Large ribosomal subunit protein bL21 (103 aa).

It belongs to the bacterial ribosomal protein bL21 family. Part of the 50S ribosomal subunit. Contacts protein L20.

This protein binds to 23S rRNA in the presence of protein L20. This chain is Large ribosomal subunit protein bL21, found in Pseudomonas paraeruginosa (strain DSM 24068 / PA7) (Pseudomonas aeruginosa (strain PA7)).